The following is a 393-amino-acid chain: Short-chain dehydrogenase/reductase family 42E member 1 (393 aa).

The active-site Proton acceptor is Tyr152. Residue Lys156 participates in NAD(+) binding. The next 2 membrane-spanning stretches (helical) occupy residues 282-302 (LPLT…FILG) and 371-391 (GLLV…SVIL).

This sequence belongs to the 3-beta-HSD family.

It localises to the membrane. In Macaca fascicularis (Crab-eating macaque), this protein is Short-chain dehydrogenase/reductase family 42E member 1 (SDR42E1).